The chain runs to 443 residues: 23S rRNA (uracil(1939)-C(5))-methyltransferase RlmD (443 aa).

Positions A12 to R70 constitute a TRAM domain. Positions 83, 89, 92, and 171 each coordinate [4Fe-4S] cluster. Q276, F305, N310, E326, D353, and D373 together coordinate S-adenosyl-L-methionine. Residue C399 is the Nucleophile of the active site.

Belongs to the class I-like SAM-binding methyltransferase superfamily. RNA M5U methyltransferase family. RlmD subfamily.

The catalysed reaction is uridine(1939) in 23S rRNA + S-adenosyl-L-methionine = 5-methyluridine(1939) in 23S rRNA + S-adenosyl-L-homocysteine + H(+). Functionally, catalyzes the formation of 5-methyl-uridine at position 1939 (m5U1939) in 23S rRNA. This is 23S rRNA (uracil(1939)-C(5))-methyltransferase RlmD from Shewanella amazonensis (strain ATCC BAA-1098 / SB2B).